We begin with the raw amino-acid sequence, 230 residues long: Ribonuclease 3 (230 aa).

Residues 5-134 (EALLKSSFAI…FLGALLLDKG (130 aa)) enclose the RNase III domain. E47 contributes to the Mg(2+) binding site. D51 is an active-site residue. Mg(2+) contacts are provided by D120 and E123. The active site involves E123. Residues 160–229 (DYKTSLQEIL…AENALKALSE (70 aa)) enclose the DRBM domain.

It belongs to the ribonuclease III family. Homodimer. It depends on Mg(2+) as a cofactor.

The protein resides in the cytoplasm. The enzyme catalyses Endonucleolytic cleavage to 5'-phosphomonoester.. Functionally, digests double-stranded RNA. Involved in the processing of primary rRNA transcript to yield the immediate precursors to the large and small rRNAs (23S and 16S). Processes some mRNAs, and tRNAs when they are encoded in the rRNA operon. Processes pre-crRNA and tracrRNA of type II CRISPR loci if present in the organism. In Streptococcus uberis (strain ATCC BAA-854 / 0140J), this protein is Ribonuclease 3.